Reading from the N-terminus, the 605-residue chain is ATP-dependent RNA helicase DBP3 (605 aa).

The disordered stretch occupies residues methionine 1–lysine 124. Over residues lysine 54–lysine 66 the composition is skewed to basic residues. The segment covering proline 104–glutamate 114 has biased composition (polar residues). Positions leucine 175–alanine 201 match the Q motif motif. The Helicase ATP-binding domain occupies tryptophan 204–isoleucine 391. Alanine 217 to threonine 224 is an ATP binding site. Residues aspartate 336–aspartate 339 carry the DEAD box motif. Positions histidine 424 to proline 575 constitute a Helicase C-terminal domain.

The protein belongs to the DEAD box helicase family. DDX5/DBP2 subfamily.

The protein localises to the nucleus. It is found in the nucleolus. The catalysed reaction is ATP + H2O = ADP + phosphate + H(+). Its function is as follows. ATP-dependent RNA helicase required for 60S ribosomal subunit synthesis. Involved in efficient pre-rRNA processing, predominantly at site A3, which is necessary for the normal formation of 25S and 5.8S rRNAs. The protein is ATP-dependent RNA helicase DBP3 (DBP3) of Cryptococcus neoformans var. neoformans serotype D (strain JEC21 / ATCC MYA-565) (Filobasidiella neoformans).